The following is a 459-amino-acid chain: Prenyltransferase penI (459 aa).

L-tryptophan is bound by residues 107 to 108 (VV) and glutamate 111. Positions 126, 276, 278, 280, and 384 each coordinate substrate.

The protein belongs to the tryptophan dimethylallyltransferase family.

The catalysed reaction is quinolinone B + dimethylallyl diphosphate = peniprequinolone + diphosphate. The protein operates within secondary metabolite biosynthesis. Its pathway is alkaloid biosynthesis. It participates in mycotoxin biosynthesis. Prenyltransferase; part of the gene cluster that mediates the biosynthesis of penigequinolones, potent insecticidal alkaloids that contain a highly modified 10-carbon prenyl group. The first stage is catalyzed by the nonribosomal peptide synthetase penN that condenses anthranilic acid and O-methyl-L-tyrosine to produce 4'-methoxycyclopeptin. 4'-methoxycyclopeptin is then converted to 4'-methoxydehydrocyclopeptin by the ketoglutarate-dependent dioxygenase penM through dehydrogenation to form a double bond between C-alpha and C-beta of the O-methyltyrosine side chain. PenM also converts its first product methoxydehydrocyclopeptin to 4'-methoxycyclopenin. The following conversion of 4'methoxycyclopenin into 4'-methoxyviridicatin is catalyzed by the cyclopenase penL. 4'-methoxyviridicatin is the precursor of quinolone natural products, and is further converted to quinolinone B. The prenyltransferase penI then catalyzes the canonical Friedel-Crafts alkylation of quinolinone B with dimethylallyl cation to yield dimethylallyl quinolone, which is subjected to FAD-dependent dehydrogenation by the FAD-linked oxidoreductase penH to yield conjugated aryl diene. The delta(3') double bond then serves as the site of the second alkylation with DMAPP catalyzed by the prenyltransferase penG to yield a carbenium ion intermediate, which can be attacked by H(2)O to yield a styrenyl quinolone containing a C3'-hydroxyprenyl chain, or undergo cyclization to yield yaequinolones J1 and J2. The conversion of the styrenyl quinolone into the tetrahydrofuran-containing yaequinolone C is performed by the FAD-dependent monooxygenase penE and involves epoxidation of the terminal C7'-C8' olefin, followed by epoxide ring opening initiated by the C3' hydroxyl group. The predicted cysteine hydrolase penJ acts as an epoxide hydrolase that enhances the rate of the 5-exo-tet cyclization step, increasing the yield of yaequinolone C. PenF catalyzes the cationic rearrangement of the epoxide formed by penE (before ring opening to produce yaequinolone C) into yaequinolone D. Finally, the short-chain dehydrogenase/reductase (SDR)-like reductase penD, catalyzes both the dehydration of yaequinolone D and the reduction of the resulting oxonium to yield penigequinolone. The chain is Prenyltransferase penI from Penicillium thymicola.